The sequence spans 686 residues: MTDTLLPAAPQPLEKEGDDYFRKGCNPLAQTGRSKLQNQRAALNQQILKAVRMRTGAENLLKVATNQKVREQVRLELSFVNSDLQMLKEELEGLNISVGVYQGTEEAFTIPLIPLGLKETKEVDFSIVFKDFILEHYSEDSYLYEDDIADLMDLRQACRTPSRDEAGVELLMSYFIQLGFVESRFFPPTRHMGLLFTWYDSFTGVPVSQQTLLLEKASVLFNIGALYTQIGTRCNRQTQAGLESAVDAFQRAAGVLNYLKETFTHTPSYDMSPAMLSVLVKMMLAQAQESVFEKVCLPGIQNEFFVLVKVAQEAAKVAEAYRQLHAAMSQEPVKENIPYSWASVAYVKAYHYGALAHYFAATLLIDHQLKPGADEDHQEKCLSQLYDRMPEGMTPLATLKNAGQRVLLGKGHLHRAIGFHEESLREANLCKKLRDIQVLRDVLSAAHQRTQLKHTQHREDDDLLNLIDAPDVLPKTEREVKITFPDFSKVTVTDFFQKLGPLSVFSASKRWSPPRGIHFTVEEGDLGFTLRGNTPVQVHFLDPHCSASLAGAKEGDYIVSIQGVDCKWLTVSEVMKLLKSFGGEEVEMKVVSLLDSTSSMHNKCATYSVGMQKTYSMICLSMDDDDKADKTKKISKKLSFLSWGTSKNRQKSASTLCLPEVGLARSQNKKKLPTPFSLLNSDSSLY.

The region spanning 26–100 is the REM-1 domain; sequence NPLAQTGRSK…LEGLNISVGV (75 aa). An interaction with Rho region spans residues 46-66; it reads QILKAVRMRTGAENLLKVATN. Residues 111-502 form the BRO1 domain; the sequence is PLIPLGLKET…TDFFQKLGPL (392 aa). Residues 515–593 form the PDZ domain; that stretch reads RGIHFTVEEG…EEVEMKVVSL (79 aa). The residue at position 655 (Thr655) is a Phosphothreonine.

It belongs to the RHPN family. As to quaternary structure, interacts with GTP-bound RhoA and RhoB. Interacts with both GTP- and GDP-bound RhoA. Interacts with KRT18.

It is found in the cytoplasm. The protein resides in the perinuclear region. Functionally, binds specifically to GTP-Rho. May function in a Rho pathway to limit stress fiber formation and/or increase the turnover of F-actin structures in the absence of high levels of RhoA activity. This chain is Rhophilin-2 (Rhpn2), found in Mus musculus (Mouse).